The primary structure comprises 358 residues: Serine/threonine-protein phosphatase 2A activator 2 (358 aa).

The protein belongs to the PTPA-type PPIase family.

It is found in the cytoplasm. It catalyses the reaction [protein]-peptidylproline (omega=180) = [protein]-peptidylproline (omega=0). Its function is as follows. PPIases accelerate the folding of proteins. It catalyzes the cis-trans isomerization of proline imidic peptide bonds in oligopeptides. Acts as a regulatory subunit for PP2A-like phosphatases modulating their activity or substrate specificity, probably by inducing a conformational change in the catalytic subunit, a direct target of the PPIase. Can reactivate inactive phosphatase PP2A-phosphatase methylesterase complexes (PP2Ai) in presence of ATP and Mg(2+) by dissociating the inactive form from the complex. This chain is Serine/threonine-protein phosphatase 2A activator 2 (RRD2), found in Candida albicans (strain SC5314 / ATCC MYA-2876) (Yeast).